The chain runs to 238 residues: Protein TIFY 3A (238 aa).

The region spanning 39–74 is the Tify 1 domain; the sequence is EPDASTQLTIIFGGSCRVFNGVPAQKVQEIIRIAFA. The Jas 1 motif lies at 101-120; it reads PIARRRSLQRFLEKRRDRST. A Nuclear localization signal 1 motif is present at residues 103–110; that stretch reads ARRRSLQR. In terms of domain architecture, Tify 2 spans 125–160; the sequence is SMILPSQLTIIFGGSFSVFDGIPAEKVQEILHIAAA. The Jas 2 motif lies at 197-222; that stretch reads PIARRRSLQRFFEKRRHRFVHTKPYS. A Nuclear localization signal 2 motif is present at residues 199-206; that stretch reads ARRRSLQR. Residues 219–238 form a disordered region; that stretch reads KPYSATTSEADKNETSPIVT.

It belongs to the TIFY/JAZ family. As to quaternary structure, interacts with MYC2, MYB21, MYB24, AFPH2/NINJA, TIFY10A/JAZ1, TIFY10B/JAZ2, TIFY6B/JAZ3, TIFY6A/JAZ4, TIFY7/JAZ9 and TIFY9/JAZ10. In terms of processing, ubiquitinated. Targeted for degradation by the SCF(COI1) E3 ubiquitin ligase-proteasome pathway during jasmonate signaling.

Its subcellular location is the nucleus. Repressor of jasmonate (JA) responses. Targets MYC2, MYC3 and MYC4 that are JA-dependent transcription activators. The protein is Protein TIFY 3A (TIFY3A) of Arabidopsis thaliana (Mouse-ear cress).